Consider the following 144-residue polypeptide: MTLQFEAFCAGGLAPGWSLTVQGHADAGEEKFEINFLTDAGDIAFHVKPRFSSATVVGNAFQGGRWGQEEVSSIFPLTLGEPFEMEVSADAEHFHIYAQEQKVLQFPHRHRPLATITRVRVLSEHRLAQVELAKRSLSWGDGGY.

One can recognise a Galectin domain in the interval 5 to 133 (FEAFCAGGLA…EHRLAQVELA (129 aa)). Serine 138 is subject to Phosphoserine.

In terms of assembly, homodimer.

The protein is Grifin (Grifin) of Mus musculus (Mouse).